A 92-amino-acid polypeptide reads, in one-letter code: Small ribosomal subunit protein uS19 (92 aa).

Belongs to the universal ribosomal protein uS19 family.

Functionally, protein S19 forms a complex with S13 that binds strongly to the 16S ribosomal RNA. The protein is Small ribosomal subunit protein uS19 of Polaromonas sp. (strain JS666 / ATCC BAA-500).